Consider the following 209-residue polypeptide: Probable nicotinate-nucleotide adenylyltransferase (209 aa).

The protein belongs to the NadD family.

It carries out the reaction nicotinate beta-D-ribonucleotide + ATP + H(+) = deamido-NAD(+) + diphosphate. Its pathway is cofactor biosynthesis; NAD(+) biosynthesis; deamido-NAD(+) from nicotinate D-ribonucleotide: step 1/1. Functionally, catalyzes the reversible adenylation of nicotinate mononucleotide (NaMN) to nicotinic acid adenine dinucleotide (NaAD). This chain is Probable nicotinate-nucleotide adenylyltransferase, found in Streptococcus pneumoniae serotype 4 (strain ATCC BAA-334 / TIGR4).